Reading from the N-terminus, the 543-residue chain is CTP synthase (543 aa).

An amidoligase domain region spans residues 1–265; that stretch reads MTRYIFVTGG…DDFVVERFGL (265 aa). Serine 13 serves as a coordination point for CTP. Serine 13 lines the UTP pocket. Residues 14–19 and aspartate 71 each bind ATP; that span reads SLGKGI. Residues aspartate 71 and glutamate 139 each coordinate Mg(2+). CTP-binding positions include 146-148, 186-191, and lysine 222; these read DIE and KTKPTQ. Residues 186–191 and lysine 222 contribute to the UTP site; that span reads KTKPTQ. One can recognise a Glutamine amidotransferase type-1 domain in the interval 290 to 541; it reads TIAMVGKYME…VKAALAQHQK (252 aa). An L-glutamine-binding site is contributed by glycine 351. Cysteine 378 serves as the catalytic Nucleophile; for glutamine hydrolysis. L-glutamine contacts are provided by residues 379-382, glutamate 402, and arginine 469; that span reads LGMQ. Residues histidine 514 and glutamate 516 contribute to the active site.

It belongs to the CTP synthase family. Homotetramer.

It catalyses the reaction UTP + L-glutamine + ATP + H2O = CTP + L-glutamate + ADP + phosphate + 2 H(+). The enzyme catalyses L-glutamine + H2O = L-glutamate + NH4(+). It carries out the reaction UTP + NH4(+) + ATP = CTP + ADP + phosphate + 2 H(+). It participates in pyrimidine metabolism; CTP biosynthesis via de novo pathway; CTP from UDP: step 2/2. Its activity is regulated as follows. Allosterically activated by GTP, when glutamine is the substrate; GTP has no effect on the reaction when ammonia is the substrate. The allosteric effector GTP functions by stabilizing the protein conformation that binds the tetrahedral intermediate(s) formed during glutamine hydrolysis. Inhibited by the product CTP, via allosteric rather than competitive inhibition. In terms of biological role, catalyzes the ATP-dependent amination of UTP to CTP with either L-glutamine or ammonia as the source of nitrogen. Regulates intracellular CTP levels through interactions with the four ribonucleotide triphosphates. This Pseudomonas fluorescens (strain Pf0-1) protein is CTP synthase.